A 227-amino-acid polypeptide reads, in one-letter code: UPF0173 metal-dependent hydrolase Saci_1512 (227 aa).

The protein belongs to the UPF0173 family.

This chain is UPF0173 metal-dependent hydrolase Saci_1512, found in Sulfolobus acidocaldarius (strain ATCC 33909 / DSM 639 / JCM 8929 / NBRC 15157 / NCIMB 11770).